A 61-amino-acid chain; its full sequence is Large ribosomal subunit protein uL30 (61 aa).

The protein belongs to the universal ribosomal protein uL30 family. Part of the 50S ribosomal subunit.

In Corynebacterium urealyticum (strain ATCC 43042 / DSM 7109), this protein is Large ribosomal subunit protein uL30.